A 316-amino-acid chain; its full sequence is HTH-type transcriptional regulator cbl (316 aa).

The region spanning 1–59 is the HTH lysR-type domain; the sequence is MNFQQLKIIREAARQDYNLTEVANMLFTSQSGVSRHIRELEDELGIEIFVRRGKRLLGM. Positions 19–38 form a DNA-binding region, H-T-H motif; it reads LTEVANMLFTSQSGVSRHIR.

The protein belongs to the LysR transcriptional regulatory family.

May be an accessory regulatory protein within the cys regulon. This is HTH-type transcriptional regulator cbl (cbl) from Escherichia coli (strain K12).